Reading from the N-terminus, the 411-residue chain is Lissencephaly-1 homolog (411 aa).

One can recognise a LisH domain in the interval 9–41; it reads QREELNQAIADYLGSNGYADSLETFRKEADLST. The stretch at 56–83 forms a coiled coil; sequence TSVIRLQKKVMELEAKLTEAEKEVIEGA. WD repeat units follow at residues 106–147, 148–187, 191–230, 233–272, 275–334, 337–376, and 379–411; these read GHRA…RSLK, GHTDSVQDVAFDAQGKLLASCSADLSIKLWDFQQSYECIK, GHDHNVSSVAFVPAGDYVLSASRDRTIKMWEVATGYCVKT, GHREWVRMVRVHIEGSIFATCSNDQTIRVWLTNSKDCKVE, DHEH…CLLT, GHDNWVRGLAFHPGGKYLVSASDDKTIRVWDLRNKRCMKT, and AHQHFCTSIDFHKAHPYVISGSVDQTVKVWECR.

This sequence belongs to the WD repeat LIS1/nudF family.

The protein localises to the cytoplasm. It is found in the cytoskeleton. The protein resides in the microtubule organizing center. Its subcellular location is the centrosome. Positively regulates the activity of the minus-end directed microtubule motor protein dynein. May enhance dynein-mediated microtubule sliding by targeting dynein to the microtubule plus end. Required for several dynein- and microtubule-dependent processes. The sequence is that of Lissencephaly-1 homolog from Drosophila sechellia (Fruit fly).